Reading from the N-terminus, the 888-residue chain is Rab GTPase-activating protein eat-17 (888 aa).

The segment covering 41–60 has biased composition (low complexity); the sequence is RSNSNSTSSPRNSPSQLSPP. Disordered stretches follow at residues 41–87 and 104–135; these read RSNS…CETG and LNKSNEEDSRSVASKKTGSSESRKGAREHSPE. Residues 114-123 are compositionally biased toward polar residues; that stretch reads SVASKKTGSS. A compositionally biased stretch (basic and acidic residues) spans 124–133; sequence ESRKGAREHS. One can recognise a Rab-GAP TBC domain in the interval 173–357; sequence GIPQHFRMIA…RIMDCFLVEG (185 aa). The segment at 631-654 is disordered; it reads ASIEKESTSEAHSTQQQPSPPLTS. A coiled-coil region spans residues 694 to 770; that stretch reads EADTLAELKE…ESEFNEGRIN (77 aa). The interval 854-888 is disordered; the sequence is LAEEGSATETDELRPKELNDGNDTTDSGVQLSDSH. The segment covering 874-888 has biased composition (polar residues); the sequence is GNDTTDSGVQLSDSH.

In terms of assembly, may interact with rab-6.2 (in GTP-bound form). In terms of tissue distribution, highly expressed in the terminal bulb muscles, pharyngeal muscle, in intestine and vulva.

Functionally, rab GTPase activating protein for the small GTPase rab-6.2. Required for grinder formation, which is the feeding organ that breaks down food. In Caenorhabditis elegans, this protein is Rab GTPase-activating protein eat-17.